A 104-amino-acid chain; its full sequence is Replication restart protein PriB (104 aa).

Positions 2-101 (TNRLVLSGTV…LHAEQIELID (100 aa)) constitute an SSB domain. Residues Cys-48 and Cys-80 are joined by a disulfide bond. The short motif at 82-89 (KAKNGLSK) is the L45 loop element.

This sequence belongs to the PriB family. In terms of assembly, homodimer. Primosome assembly occurs via a 'hand-off' mechanism. PriA binds to replication forks, subsequently PriB then DnaT bind; DnaT then displaces ssDNA to generate the helicase loading substrate, which allows DnaC to load helicase DnaB onto the fork. ssDNA is displaced from the PriB-ssDNA complex by DnaT. In a PriA-PriB-replication fork structure, movement of the PriA CRR domain exposes a surface to which PriB binds and contacts ssDNA emerging from the PriA pore. Binds PriA; binding is improved in the presence of ssDNA. Weakly binds DnaT; binding is improved in the presence of ssDNA; as DnaT levels increase PriB dissociates from ssDNA. Component of the replication restart primosome, which is composed of PriA, PriB, PriC, DnaB and DnaT; DnaG primase associates transiently with this complex. Component of the preprimosomal complex composed of one monomer of PriC and DnaT, two monomers of PriA, two dimers of PriB and one hexamer of DnaB. In terms of processing, an intersubunit disulfide bond is seen in some crystals.

In terms of biological role, involved in the restart of stalled replication forks, which reloads the replicative helicase (DnaB) on sites other than the origin of replication; the PriA-PriB pathway is the major replication restart pathway. There are several restart pathways, the PriA-PriB pathway is subdivided into 2 distinct pathways. priB and priC have redundant roles in the cell. During primosome assembly it facilitates complex formation between PriA and DnaT on DNA; stabilizes PriA on DNA, presumably by preventing or inhibiting PriA DNA translocation activity. Forms a branched DNA-PriA-PriB complex when the lagging strand is single-stranded (ss)DNA. Binds ssDNA in the presence and absence of ssDNA DNA-binding protein (SSB), does not bind branched structures. DNA binding, forming spiral filaments on ssDNA, is cooperative. Stimulates the helicase activity of PriA. The homodimer binds 12 nucleotides of ssDNA. Binds homo-pyrimidine tracts better than homo-purine tracts. Functionally, genetic interactions among priB, dam, lexA, nagC, polA, rdgB, rdgB, rep and uup link the PriA-PriB replication restart pathway to DNA double-strand break repair. This chain is Replication restart protein PriB, found in Escherichia coli (strain K12).